Consider the following 459-residue polypeptide: uncharacterized protein (459 aa).

The next 2 membrane-spanning stretches (helical) occupy residues 53 to 75 and 111 to 133; these read IPLLPVLALSVGALTVLGQGLTL and ARIARVLLLVAGVFTLVIVCLCA. Residues 174–196 are disordered; sequence HLDNPSAPHPSENPQSRAHPKQN.

It is found in the cell membrane. This is an uncharacterized protein from Treponema pallidum (strain Nichols).